A 192-amino-acid chain; its full sequence is Transposon Tn552 DNA-invertase BinR (192 aa).

Residues 1-136 (MKIGYARVST…AGRIAARARG (136 aa)) enclose the Resolvase/invertase-type recombinase catalytic domain. The active-site O-(5'-phospho-DNA)-serine intermediate is serine 9. The segment at residues 163–182 (IKTIAEQWKVSRTTIYRYLN) is a DNA-binding region (H-T-H motif).

It belongs to the site-specific recombinase resolvase family.

Its function is as follows. DNA-invertase, mediating the inversion of inv. This is Transposon Tn552 DNA-invertase BinR (resR) from Staphylococcus aureus.